Consider the following 875-residue polypeptide: Alanine--tRNA ligase (875 aa).

4 residues coordinate Zn(2+): His565, His569, Cys666, and His670.

Belongs to the class-II aminoacyl-tRNA synthetase family. It depends on Zn(2+) as a cofactor.

The protein resides in the cytoplasm. It catalyses the reaction tRNA(Ala) + L-alanine + ATP = L-alanyl-tRNA(Ala) + AMP + diphosphate. In terms of biological role, catalyzes the attachment of alanine to tRNA(Ala) in a two-step reaction: alanine is first activated by ATP to form Ala-AMP and then transferred to the acceptor end of tRNA(Ala). Also edits incorrectly charged Ser-tRNA(Ala) and Gly-tRNA(Ala) via its editing domain. The polypeptide is Alanine--tRNA ligase (Methylibium petroleiphilum (strain ATCC BAA-1232 / LMG 22953 / PM1)).